Reading from the N-terminus, the 254-residue chain is tRNA (guanine-N(1)-)-methyltransferase (254 aa).

Residues G119 and 139-144 each bind S-adenosyl-L-methionine; that span reads IGDFVL.

Belongs to the RNA methyltransferase TrmD family. Homodimer.

Its subcellular location is the cytoplasm. It carries out the reaction guanosine(37) in tRNA + S-adenosyl-L-methionine = N(1)-methylguanosine(37) in tRNA + S-adenosyl-L-homocysteine + H(+). In terms of biological role, specifically methylates guanosine-37 in various tRNAs. This chain is tRNA (guanine-N(1)-)-methyltransferase, found in Dechloromonas aromatica (strain RCB).